The following is a 342-amino-acid chain: Arrestin domain-containing protein 5 (342 aa).

The protein belongs to the arrestin family. Testis-enriched.

Its subcellular location is the membrane. Its function is as follows. Plays an essential role in spermatogenesis. May be involved in the anchoring of the sperm head to the tail during spermatogenesis by affecting SEC22A-mediated SUN5 and NDC1 transport and localization. This chain is Arrestin domain-containing protein 5 (ARRDC5), found in Homo sapiens (Human).